The sequence spans 188 residues: Elongation factor P (188 aa).

Lysine 34 carries the post-translational modification N6-(3,6-diaminohexanoyl)-5-hydroxylysine.

It belongs to the elongation factor P family. May be beta-lysylated on the epsilon-amino group of Lys-34 by the combined action of EpmA and EpmB, and then hydroxylated on the C5 position of the same residue by EpmC (if this protein is present). Lysylation is critical for the stimulatory effect of EF-P on peptide-bond formation. The lysylation moiety may extend toward the peptidyltransferase center and stabilize the terminal 3-CCA end of the tRNA. Hydroxylation of the C5 position on Lys-34 may allow additional potential stabilizing hydrogen-bond interactions with the P-tRNA.

The protein resides in the cytoplasm. It participates in protein biosynthesis; polypeptide chain elongation. Involved in peptide bond synthesis. Alleviates ribosome stalling that occurs when 3 or more consecutive Pro residues or the sequence PPG is present in a protein, possibly by augmenting the peptidyl transferase activity of the ribosome. Modification of Lys-34 is required for alleviation. This is Elongation factor P from Erwinia tasmaniensis (strain DSM 17950 / CFBP 7177 / CIP 109463 / NCPPB 4357 / Et1/99).